A 1657-amino-acid polypeptide reads, in one-letter code: Androglobin (1657 aa).

Residues 1–11 (MASKQAKRKEV) show a composition bias toward basic residues. 2 disordered regions span residues 1–40 (MASK…SFEQ) and 321–398 (TKEN…SSDV). Residues 70–402 (KDKTAKSPIF…RPSSDVQYSM (333 aa)) form the Calpain catalytic domain. The span at 321–386 (TKENKDGKDG…DGEKEKEKFK (66 aa)) shows a compositional bias: basic and acidic residues. A Globin; C-terminal part domain is found at 762-889 (HVCSMTTFVI…EDVSLAEWVD (128 aa)). Heme b-binding residues include Gln791 and His823. Residues 905-934 (EIAAAVKIQSMWKGCYVRLLMKARKPETKE) enclose the IQ domain. A Globin; N-terminal part domain is found at 935–967 (NVTVADTLQKIWAVLEMNLEQYALSLLRLMFKS). Disordered stretches follow at residues 1184–1226 (SKQV…TDTG), 1288–1356 (KHEE…QEDP), 1422–1459 (TTDT…ADIK), and 1638–1657 (IEKK…GKKK). Over residues 1321 to 1336 (EKSAEKEKLAKEKQAP) the composition is skewed to basic and acidic residues. 2 stretches are compositionally biased toward polar residues: residues 1341 to 1351 (QQVQMPTAVHS) and 1422 to 1443 (TTDT…SQTK). Residues 1585–1640 (DEVLEMYGEMRDSVDEARQKILDIREVYRNKLLEAERLRMEALAAQEAAVKIEIEK) adopt a coiled-coil conformation.

It in the central section; belongs to the globin family. In the N-terminal section; belongs to the peptidase C2 family. Interacts with septin SEPT10; contributes to in vitro proteolytic cleavage of SEPT10 in a calmodulin-dependent manner. Interacts with CFAP69. Interacts with SPEF2. May interact with calmodulin. As to expression, strongly expressed in testis and lung. Weakly expressed in heart, brain, spleen, kidney and tongue.

The protein resides in the cell projection. Its subcellular location is the cilium. It is found in the flagellum. Probable chimeric globin with a bis-histidyl six-coordinate heme-iron atom through which it could bind dioxygen, carbon monoxide and nitric oxide. Required for sperm flagellum formation and maturation of elongating spermatids, thus playing an essential role in male fertility. In Mus musculus (Mouse), this protein is Androglobin.